The sequence spans 101 residues: Small ribosomal subunit protein uS14 (101 aa).

This sequence belongs to the universal ribosomal protein uS14 family. As to quaternary structure, part of the 30S ribosomal subunit. Contacts proteins S3 and S10.

In terms of biological role, binds 16S rRNA, required for the assembly of 30S particles and may also be responsible for determining the conformation of the 16S rRNA at the A site. In Ehrlichia chaffeensis (strain ATCC CRL-10679 / Arkansas), this protein is Small ribosomal subunit protein uS14.